Consider the following 517-residue polypeptide: GMP synthase [glutamine-hydrolyzing] (517 aa).

Residues 9–199 (RILILDFGSQ…VLNACGCEGL (191 aa)) enclose the Glutamine amidotransferase type-1 domain. Cys86 functions as the Nucleophile in the catalytic mechanism. Active-site residues include His173 and Glu175. Residues 200–392 (WTSASIIEDA…LGLPYNMLYR (193 aa)) form the GMPS ATP-PPase domain. ATP is bound at residue 227–233 (SGGVDSS).

As to quaternary structure, homodimer.

It catalyses the reaction XMP + L-glutamine + ATP + H2O = GMP + L-glutamate + AMP + diphosphate + 2 H(+). The protein operates within purine metabolism; GMP biosynthesis; GMP from XMP (L-Gln route): step 1/1. Catalyzes the synthesis of GMP from XMP. The polypeptide is GMP synthase [glutamine-hydrolyzing] (Vibrio atlanticus (strain LGP32) (Vibrio splendidus (strain Mel32))).